The primary structure comprises 356 residues: Phenylalanine dehydrogenase (356 aa).

Arg43 is a binding site for NAD(+). L-phenylalanine is bound at residue Lys67. The Proton donor/acceptor role is filled by Lys79. 118–119 contributes to the L-phenylalanine binding site; that stretch reads PD. Residues Asp119, Ser150, Thr154, 183–189, 206–207, Arg211, 240–241, and 261–263 contribute to the NAD(+) site; these read GLGAVGG, DT, AM, and AAN. Asn263 provides a ligand contact to L-phenylalanine.

It belongs to the Glu/Leu/Phe/Val dehydrogenases family. As to quaternary structure, homotetramer, dimer of dimers.

It catalyses the reaction L-phenylalanine + NAD(+) + H2O = 3-phenylpyruvate + NH4(+) + NADH + H(+). Its pathway is amino-acid biosynthesis; L-phenylalanine biosynthesis; L-phenylalanine from phenylpyruvate (PDH route): step 1/1. With respect to regulation, subject to competitive inhibition by 3-phenylpropionate for the conversion of L-phenylalanine to phenylpyruvate. Subject to competitive inhibition by D-phenylalanine for the conversion of phenylpyruvate to L-phenylalanine. In terms of biological role, catalyzes the reversible NAD(+)-dependent oxidative deamination of L-phenylalanine to phenylpyruvate. This is Phenylalanine dehydrogenase from Rhodococcus sp.